The primary structure comprises 380 residues: Mitogen-activated protein kinase 3 (380 aa).

Alanine 2 bears the N-acetylalanine mark. The Protein kinase domain occupies 43-331; sequence YTQLQYIGEG…VEEALAHPYL (289 aa). ATP contacts are provided by residues 49-57 and lysine 72; that span reads IGEGAYGMV. The Proton acceptor role is filled by aspartate 167. Residue threonine 199 is modified to Phosphothreonine. Phosphothreonine; by MAP2K1 and MAP2K2 is present on threonine 203. Residues 203-205 carry the TXY motif; sequence TEY. Tyrosine 205 carries the post-translational modification Phosphotyrosine; by MAP2K1 and MAP2K2. A Phosphothreonine; by autocatalysis modification is found at threonine 208.

It belongs to the protein kinase superfamily. CMGC Ser/Thr protein kinase family. MAP kinase subfamily. Binds both upstream activators and downstream substrates in multimolecular complexes. Found in a complex with at least BRAF, HRAS, MAP2K1/MEK1, MAPK3 and RGS14. Interacts with TPR. Interacts with ADAM15, ARRB2, CANX, DAPK1 (via death domain), HSF4, IER3, MAP2K1/MEK1, NISCH, and SGK1. Interacts with MORG1. Interacts with PEA15. Interacts with isoform 1 of MKNK2 and this binding prevents from dephosphorylation and inactivation. Interacts with CDKN2AIP. Interacts with HSF1 (via D domain and preferentially with hyperphosphorylated form); this interaction occurs upon heat shock. Interacts with CAVIN4. Interacts with GIT1; this interaction is necessary for MAPK3 localization to focal adhesions. Interacts with ZNF263. Interacts with EBF4. Requires Mg(2+) as cofactor. Post-translationally, dually phosphorylated on Thr-203 and Tyr-205, which activates the enzyme. Ligand-activated ALK induces tyrosine phosphorylation. Dephosphorylated by PTPRJ at Tyr-205. Autophosphorylated on threonine and tyrosine residues in vitro. Phosphorylated upon FLT3 and KIT signaling. In terms of processing, ubiquitinated by TRIM15 via 'Lys-63'-linked ubiquitination; leading to activation. Deubiquitinated by CYLD.

The protein localises to the cytoplasm. The protein resides in the nucleus. Its subcellular location is the membrane. It is found in the caveola. It localises to the cell junction. The protein localises to the focal adhesion. It catalyses the reaction L-seryl-[protein] + ATP = O-phospho-L-seryl-[protein] + ADP + H(+). It carries out the reaction L-threonyl-[protein] + ATP = O-phospho-L-threonyl-[protein] + ADP + H(+). Phosphorylated by MAP2K1/MEK1 and MAP2K2/MEK2 on Thr-203 and Tyr-205 in response to external stimuli like insulin or NGF. Both phosphorylations are required for activity. This phosphorylation causes dramatic conformational changes, which enable full activation and interaction of MAPK1/ERK2 with its substrates. Dephosphorylated and inactivated by DUSP3, DUSP6 and DUSP9. Serine/threonine kinase which acts as an essential component of the MAP kinase signal transduction pathway. MAPK1/ERK2 and MAPK3/ERK1 are the 2 MAPKs which play an important role in the MAPK/ERK cascade. They participate also in a signaling cascade initiated by activated KIT and KITLG/SCF. Depending on the cellular context, the MAPK/ERK cascade mediates diverse biological functions such as cell growth, adhesion, survival and differentiation through the regulation of transcription, translation, cytoskeletal rearrangements. The MAPK/ERK cascade also plays a role in initiation and regulation of meiosis, mitosis, and postmitotic functions in differentiated cells by phosphorylating a number of transcription factors. About 160 substrates have already been discovered for ERKs. Many of these substrates are localized in the nucleus, and seem to participate in the regulation of transcription upon stimulation. However, other substrates are found in the cytosol as well as in other cellular organelles, and those are responsible for processes such as translation, mitosis and apoptosis. Moreover, the MAPK/ERK cascade is also involved in the regulation of the endosomal dynamics, including lysosome processing and endosome cycling through the perinuclear recycling compartment (PNRC); as well as in the fragmentation of the Golgi apparatus during mitosis. The substrates include transcription factors (such as ATF2, BCL6, ELK1, ERF, FOS, HSF4 or SPZ1), cytoskeletal elements (such as CANX, CTTN, GJA1, MAP2, MAPT, PXN, SORBS3 or STMN1), regulators of apoptosis (such as BAD, BTG2, CASP9, DAPK1, IER3, MCL1 or PPARG), regulators of translation (such as EIF4EBP1) and a variety of other signaling-related molecules (like ARHGEF2, DEPTOR, FRS2 or GRB10). Protein kinases (such as RAF1, RPS6KA1/RSK1, RPS6KA3/RSK2, RPS6KA2/RSK3, RPS6KA6/RSK4, SYK, MKNK1/MNK1, MKNK2/MNK2, RPS6KA5/MSK1, RPS6KA4/MSK2, MAPKAPK3 or MAPKAPK5) and phosphatases (such as DUSP1, DUSP4, DUSP6 or DUSP16) are other substrates which enable the propagation the MAPK/ERK signal to additional cytosolic and nuclear targets, thereby extending the specificity of the cascade. In Mus musculus (Mouse), this protein is Mitogen-activated protein kinase 3 (Mapk3).